A 381-amino-acid chain; its full sequence is S-adenosylmethionine synthase (381 aa).

H15 is a binding site for ATP. Mg(2+) is bound at residue D17. E43 provides a ligand contact to K(+). L-methionine is bound by residues E56 and Q99. Residues 99 to 109 are flexible loop; sequence QSLDIAQGVDN. ATP contacts are provided by residues 164-166, 230-231, D239, 245-246, and K266; these read DGK, RF, and RK. An L-methionine-binding site is contributed by D239. Residue K270 coordinates L-methionine.

Belongs to the AdoMet synthase family. In terms of assembly, homotetramer; dimer of dimers. Requires Mg(2+) as cofactor. K(+) is required as a cofactor.

The protein localises to the cytoplasm. It catalyses the reaction L-methionine + ATP + H2O = S-adenosyl-L-methionine + phosphate + diphosphate. It participates in amino-acid biosynthesis; S-adenosyl-L-methionine biosynthesis; S-adenosyl-L-methionine from L-methionine: step 1/1. Its function is as follows. Catalyzes the formation of S-adenosylmethionine (AdoMet) from methionine and ATP. The overall synthetic reaction is composed of two sequential steps, AdoMet formation and the subsequent tripolyphosphate hydrolysis which occurs prior to release of AdoMet from the enzyme. The chain is S-adenosylmethionine synthase from Legionella jeonii.